The sequence spans 85 residues: UPF0297 protein lhv_0439 (85 aa).

It belongs to the UPF0297 family.

The protein is UPF0297 protein lhv_0439 of Lactobacillus helveticus (strain DPC 4571).